We begin with the raw amino-acid sequence, 174 residues long: Late lactation protein B (174 aa).

Positions 1-18 are cleaved as a signal peptide; that stretch reads MKVLFLTIALSLFSILQA. C77 and C169 are oxidised to a cystine.

Belongs to the calycin superfamily. Lipocalin family. As to expression, mammary gland specific. Secreted in milk.

The protein localises to the secreted. Functionally, probably serves a role in the transport of a small ligand released during the hydrolysis of milk fat. The chain is Late lactation protein B (LLPB) from Notamacropus eugenii (Tammar wallaby).